Reading from the N-terminus, the 396-residue chain is MAKEKFERNKPHCNIGTIGHVDHGKTSLTAAITKVLAETGGATYSAYDQIDKAPEEKARGITISTAHVEYQTEARHYAHVDCPGHADYVKNMITGAAQMDGAILVVSAADGPMPQTREHILLARQVGVPALVVFMNKVDQVDDPELLELVEMEIRELLSSYDFPGDDIPIVKGSALAALEDSNKEIGHDAILELMKAVDAYIPQPERPKNLPFLMPIEDVFSISGRGTVVTGRIERGVVKVGEEIEIVGIKPTVKTTCTGVEMFRKLLDQGEAGDNVGVLLRGTKREDVERGQVLCAPGSITPHTEFEAEAYILTKEEGGRHTPFFTNYRPQFYFRTTDVTGVVTLPEGTEMVMPGDNVKMNVTLIAPIAMEEKLRFAIREGGRTVGAGVVSKVLK.

In terms of domain architecture, tr-type G spans 10–206; the sequence is KPHCNIGTIG…AVDAYIPQPE (197 aa). Residues 19 to 26 are G1; that stretch reads GHVDHGKT. Position 19–26 (19–26) interacts with GTP; sequence GHVDHGKT. Residue T26 coordinates Mg(2+). The tract at residues 60–64 is G2; sequence GITIS. The segment at 81–84 is G3; sequence DCPG. GTP is bound by residues 81–85 and 136–139; these read DCPGH and NKVD. The segment at 136-139 is G4; that stretch reads NKVD. Residues 174–176 form a G5 region; it reads SAL.

Belongs to the TRAFAC class translation factor GTPase superfamily. Classic translation factor GTPase family. EF-Tu/EF-1A subfamily. Monomer.

It localises to the cytoplasm. The enzyme catalyses GTP + H2O = GDP + phosphate + H(+). Functionally, GTP hydrolase that promotes the GTP-dependent binding of aminoacyl-tRNA to the A-site of ribosomes during protein biosynthesis. This is Elongation factor Tu from Parvibaculum lavamentivorans (strain DS-1 / DSM 13023 / NCIMB 13966).